A 129-amino-acid polypeptide reads, in one-letter code: Small ribosomal subunit protein uS8 (129 aa).

The protein belongs to the universal ribosomal protein uS8 family. Part of the 30S ribosomal subunit. Contacts proteins S5 and S12.

One of the primary rRNA binding proteins, it binds directly to 16S rRNA central domain where it helps coordinate assembly of the platform of the 30S subunit. In Mycoplasma mycoides subsp. mycoides SC (strain CCUG 32753 / NCTC 10114 / PG1), this protein is Small ribosomal subunit protein uS8.